The sequence spans 802 residues: DNA mismatch repair protein MutS (802 aa).

617 to 624 (GPNMGGKS) contacts ATP.

It belongs to the DNA mismatch repair MutS family.

This protein is involved in the repair of mismatches in DNA. It is possible that it carries out the mismatch recognition step. This protein has a weak ATPase activity. The protein is DNA mismatch repair protein MutS of Buchnera aphidicola subsp. Acyrthosiphon pisum (strain Tuc7).